Reading from the N-terminus, the 185-residue chain is Transposon Tn3 resolvase (185 aa).

A Resolvase/invertase-type recombinase catalytic domain is found at 2–137; that stretch reads RIFGYARVST…EGRQEAKLKG (136 aa). S10 acts as the O-(5'-phospho-DNA)-serine intermediate in catalysis. Residues 161–180 constitute a DNA-binding region (H-T-H motif); sequence ATEIAHQLSIARSTVYKILE.

The protein belongs to the site-specific recombinase resolvase family.

Resolvase catalyzes the resolution (a site-specific recombination) of the cointegrated replicon to yield the final transposition products. This chain is Transposon Tn3 resolvase (tnpR), found in Escherichia coli.